Reading from the N-terminus, the 107-residue chain is Integration host factor subunit alpha (107 aa).

This sequence belongs to the bacterial histone-like protein family. In terms of assembly, heterodimer of an alpha and a beta chain.

In terms of biological role, this protein is one of the two subunits of integration host factor, a specific DNA-binding protein that functions in genetic recombination as well as in transcriptional and translational control. This chain is Integration host factor subunit alpha, found in Brucella anthropi (strain ATCC 49188 / DSM 6882 / CCUG 24695 / JCM 21032 / LMG 3331 / NBRC 15819 / NCTC 12168 / Alc 37) (Ochrobactrum anthropi).